The chain runs to 292 residues: Acetylglutamate kinase (292 aa).

Residues 64–65, Arg86, and Asn190 each bind substrate; that span reads GG.

This sequence belongs to the acetylglutamate kinase family. ArgB subfamily.

The protein localises to the cytoplasm. It carries out the reaction N-acetyl-L-glutamate + ATP = N-acetyl-L-glutamyl 5-phosphate + ADP. It functions in the pathway amino-acid biosynthesis; L-arginine biosynthesis; N(2)-acetyl-L-ornithine from L-glutamate: step 2/4. Functionally, catalyzes the ATP-dependent phosphorylation of N-acetyl-L-glutamate. The sequence is that of Acetylglutamate kinase from Trichlorobacter lovleyi (strain ATCC BAA-1151 / DSM 17278 / SZ) (Geobacter lovleyi).